Here is a 301-residue protein sequence, read N- to C-terminus: NADH-cytochrome b5 reductase 3 (301 aa).

A lipid anchor (N-myristoyl glycine) is attached at G2. The region spanning 40 to 152 (DIKYPLRLID…RGPNGLLVYQ (113 aa)) is the FAD-binding FR-type domain. K42 is modified (N6-acetyllysine). Y43 bears the Phosphotyrosine mark. An N6-acetyllysine modification is found at K50. FAD-binding residues include R92, P93, Y94, V109, K111, and F114. An N6-acetyllysine modification is found at K120. The FAD site is built by K126, M127, S128, and T185.

This sequence belongs to the flavoprotein pyridine nucleotide cytochrome reductase family. As to quaternary structure, component of a complex composed of cytochrome b5, NADH-cytochrome b5 reductase (CYB5R3) and MTARC2. Interacts with MTLN; the interaction is required to maintain cellular lipid composition and leads to stimulation of mitochondrial respiratory complex I activity. It depends on FAD as a cofactor. In terms of processing, myristoylated. Ubiquitously expressed. In terms of tissue distribution, expressed only in erythroid tissues, reticulocytes and liver.

The protein resides in the endoplasmic reticulum membrane. Its subcellular location is the mitochondrion outer membrane. The protein localises to the cytoplasm. The enzyme catalyses 2 Fe(III)-[cytochrome b5] + NADH = 2 Fe(II)-[cytochrome b5] + NAD(+) + H(+). Catalyzes the reduction of two molecules of cytochrome b5 using NADH as the electron donor. The chain is NADH-cytochrome b5 reductase 3 from Rattus norvegicus (Rat).